Here is a 379-residue protein sequence, read N- to C-terminus: Chaperone protein DnaJ (379 aa).

One can recognise a J domain in the interval 5-70 (DYYEVLGLSK…EKKAMYDQYG (66 aa)). The segment at 136 to 214 (GCKKDIRIHT…CHGDGRVHKA (79 aa)) adopts a CR-type zinc-finger fold. 8 residues coordinate Zn(2+): Cys-149, Cys-152, Cys-166, Cys-169, Cys-188, Cys-191, Cys-202, and Cys-205. 4 CXXCXGXG motif repeats span residues 149–156 (CDTCHGTG), 166–173 (CSHCHGSG), 188–195 (CPSCHGTG), and 202–209 (CRSCHGDG).

The protein belongs to the DnaJ family. As to quaternary structure, homodimer. Zn(2+) serves as cofactor.

It is found in the cytoplasm. Participates actively in the response to hyperosmotic and heat shock by preventing the aggregation of stress-denatured proteins and by disaggregating proteins, also in an autonomous, DnaK-independent fashion. Unfolded proteins bind initially to DnaJ; upon interaction with the DnaJ-bound protein, DnaK hydrolyzes its bound ATP, resulting in the formation of a stable complex. GrpE releases ADP from DnaK; ATP binding to DnaK triggers the release of the substrate protein, thus completing the reaction cycle. Several rounds of ATP-dependent interactions between DnaJ, DnaK and GrpE are required for fully efficient folding. Also involved, together with DnaK and GrpE, in the DNA replication of plasmids through activation of initiation proteins. This is Chaperone protein DnaJ from Mannheimia haemolytica (Pasteurella haemolytica).